A 338-amino-acid polypeptide reads, in one-letter code: Probable 1-aminocyclopropane-1-carboxylate deaminase (338 aa).

N6-(pyridoxal phosphate)lysine is present on K51. The Nucleophile role is filled by S78.

The protein belongs to the ACC deaminase/D-cysteine desulfhydrase family. The cofactor is pyridoxal 5'-phosphate.

It carries out the reaction 1-aminocyclopropane-1-carboxylate + H2O = 2-oxobutanoate + NH4(+). In terms of biological role, catalyzes a cyclopropane ring-opening reaction, the irreversible conversion of 1-aminocyclopropane-1-carboxylate (ACC) to ammonia and alpha-ketobutyrate. In Schizosaccharomyces pombe (strain 972 / ATCC 24843) (Fission yeast), this protein is Probable 1-aminocyclopropane-1-carboxylate deaminase.